The chain runs to 691 residues: Methionine--tRNA ligase (691 aa).

A 'HIGH' region motif is present at residues 14–24 (PYANGPFHLGH). Residues cysteine 148, cysteine 151, cysteine 161, and cysteine 164 each contribute to the Zn(2+) site. The short motif at 344–348 (KMSKS) is the 'KMSKS' region element. Lysine 347 is a binding site for ATP. In terms of domain architecture, tRNA-binding spans 585–691 (DFDRVDLRVA…PGAKPGMRVR (107 aa)).

It belongs to the class-I aminoacyl-tRNA synthetase family. MetG type 1 subfamily. Homodimer. The cofactor is Zn(2+).

It is found in the cytoplasm. It carries out the reaction tRNA(Met) + L-methionine + ATP = L-methionyl-tRNA(Met) + AMP + diphosphate. Is required not only for elongation of protein synthesis but also for the initiation of all mRNA translation through initiator tRNA(fMet) aminoacylation. In Verminephrobacter eiseniae (strain EF01-2), this protein is Methionine--tRNA ligase.